Here is a 405-residue protein sequence, read N- to C-terminus: MLSLYEAAQFRVHDEEILDEALKFTTTHLKLILPELSNSLLAQQVGNALKFPIKDGVVRVEARKYISFYQQNQNHNQVLLNFAKLDFNILQMLHKKELCDITRWWKELEIVKALPYVRDRLAEVYFWSLGVYFEPQYSTARKILTKNISMISLIDDTYDIYGTLDELTLFTEAIERWNIDASEQLQLPSYMKIIYCGLLDVYDEIKKDLANENKSFLINYSIIEMKKMVMAYFQEATWYYGKTIPKMEQYMKNGISTSAYVQIAATSWLGMGNVATKDSFDWIVNEPPILVASSIIARLLNDLLSHEEEQKRGDAPSSVECYMKEYGVTKEEAHIKIRNIIENSWKDLNEEYFKVNGTIIPRVLLMCIINLARVIEFIYKDEDAYTFSKNNLKDVVYRILIDPII.

The Mg(2+) site is built by Asp-155, Asp-159, and Glu-309. A DDXXD motif motif is present at residues 155–159 (DDTYD).

The protein belongs to the terpene synthase family. Tpsa subfamily. Mg(2+) is required as a cofactor. The cofactor is Mn(2+).

The protein operates within secondary metabolite biosynthesis; terpenoid biosynthesis. Its function is as follows. Sesquiterpene synthase involved in the biosynthesis of volatile compounds. No activity detected with geranyl diphosphate (GPP) and farnesyl diphosphate (FPP) as substrates. This chain is Sesquiterpene synthase 16, found in Solanum habrochaites (Wild tomato).